We begin with the raw amino-acid sequence, 133 residues long: Ycf54-like protein (133 aa).

It belongs to the ycf54 family.

This is Ycf54-like protein from Synechocystis sp. (strain ATCC 27184 / PCC 6803 / Kazusa).